Here is a 327-residue protein sequence, read N- to C-terminus: Malate dehydrogenase (327 aa).

11 to 17 (GAAGQIA) provides a ligand contact to NAD(+). Substrate contacts are provided by arginine 92 and arginine 98. NAD(+)-binding positions include asparagine 105, glutamine 112, and 128 to 130 (VGN). Asparagine 130 and arginine 160 together coordinate substrate. Histidine 185 functions as the Proton acceptor in the catalytic mechanism.

It belongs to the LDH/MDH superfamily. MDH type 2 family.

The catalysed reaction is (S)-malate + NAD(+) = oxaloacetate + NADH + H(+). Its function is as follows. Catalyzes the reversible oxidation of malate to oxaloacetate. This chain is Malate dehydrogenase, found in Magnetococcus marinus (strain ATCC BAA-1437 / JCM 17883 / MC-1).